A 192-amino-acid chain; its full sequence is ADP-ribosylation factor-like protein 14 (192 aa).

Gly-2 carries the N-myristoyl glycine lipid modification. GTP contacts are provided by residues 20–27 (GLDSAGKS), 64–68 (DVGGQ), and 124–127 (NKQD).

This sequence belongs to the small GTPase superfamily. Arf family. As to quaternary structure, interacts with ARL14EP.

It localises to the cytoplasmic vesicle. Functionally, GTPase that recruits MYO1E to MHC class II-containing vesicles via the effector protein ARL14EP and hence controls the movement of these vesicles along the actin cytoskeleton in dendritic cells. In Mus musculus (Mouse), this protein is ADP-ribosylation factor-like protein 14 (Arl14).